Reading from the N-terminus, the 496-residue chain is Cytochrome P450 71D178 (496 aa).

A helical; Signal-anchor for type II membrane protein membrane pass occupies residues 1 to 21 (MDISISWVVIILLVLSYLILM). Cys-435 serves as a coordination point for heme.

This sequence belongs to the cytochrome P450 family. Heme serves as cofactor. Expressed in flowers, leaves and stems, especially in glandular trichomes.

It localises to the membrane. The catalysed reaction is (4S)-limonene + reduced [NADPH--hemoprotein reductase] + O2 = (1S,5R)-carveol + oxidized [NADPH--hemoprotein reductase] + H2O + H(+). The enzyme catalyses gamma-terpinene + 2 reduced [NADPH--hemoprotein reductase] + 2 O2 = carvacrol + 2 oxidized [NADPH--hemoprotein reductase] + 3 H2O + 2 H(+). It carries out the reaction gamma-terpinene + 2 reduced [NADPH--hemoprotein reductase] + 2 O2 = thymol + 2 oxidized [NADPH--hemoprotein reductase] + 3 H2O + 2 H(+). It catalyses the reaction (4R)-limonene + reduced [NADPH--hemoprotein reductase] + O2 = (1R,6S)-isopiperitenol + oxidized [NADPH--hemoprotein reductase] + H2O + H(+). The protein operates within secondary metabolite biosynthesis; terpenoid biosynthesis. Functionally, involved in the biosynthesis of phenolic monoterpenes natural products thymol and carvacrol which have a broad range of biological activities acting as antimicrobial compounds, insecticides, antioxidants and pharmaceutical agents. Catalyzes the C2- and C3-hydroxylation of gamma-terpinene to produce carvacrol and thymol, respectively. Also mediates the C6-hydroxylation of (4S)-limonene to form carveol and the C3-hydroxylation of (4R)-limonene to generate (+)-trans-isopiperitenol. The protein is Cytochrome P450 71D178 of Origanum vulgare (Wild marjoram).